The chain runs to 243 residues: Uridylate kinase (243 aa).

ATP is bound at residue 15 to 18 (KLSG). Gly-56 serves as a coordination point for UMP. ATP contacts are provided by Gly-57 and Arg-61. Residue 138 to 145 (TGNPYFST) coordinates UMP. Residues Asn-166, Tyr-172, and Asp-175 each contribute to the ATP site.

Belongs to the UMP kinase family. Homohexamer.

Its subcellular location is the cytoplasm. It catalyses the reaction UMP + ATP = UDP + ADP. It functions in the pathway pyrimidine metabolism; CTP biosynthesis via de novo pathway; UDP from UMP (UMPK route): step 1/1. Inhibited by UTP. Its function is as follows. Catalyzes the reversible phosphorylation of UMP to UDP. This Mycoplasma genitalium (strain ATCC 33530 / DSM 19775 / NCTC 10195 / G37) (Mycoplasmoides genitalium) protein is Uridylate kinase.